The primary structure comprises 219 residues: Protein OPG170 (219 aa).

Residues 1–16 form the signal peptide; sequence MYSLLFIILMCIPFSF. Asn70 carries N-linked (GlcNAc...) asparagine; by host glycosylation.

It belongs to the orthopoxvirus OPG170 family.

It is found in the secreted. In terms of biological role, may interact with several cellular chemokines to interfere with chemokine-glycosaminoglycan (GAG) interactions at the cell surface to alter chemotaxis of nearby responsive cells. This chain is Protein OPG170 (OPG170), found in Vaccinia virus (strain Copenhagen) (VACV).